Consider the following 198-residue polypeptide: MSTHLLEQLIDAFRILPGVGQKTAQRMAYHVLEREREGGQRLADVLSRAIEKIGHCTECRDFSETKICAICANYSRDRHQLCVVESPPDRLAIEQATGYRGLYFILQGRLSPLDGIGPHELGLDHLGQRLAAGEVTELIIATNATVEGETTAHYLALLARQHGIRPSRLAQGLPLGGELEYLDRGTLSHAFGTRTEVV.

The segment at 56–71 adopts a C4-type zinc-finger fold; sequence CTECRDFSETKICAIC. The 96-residue stretch at 79-174 folds into the Toprim domain; that stretch reads HQLCVVESPP…RPSRLAQGLP (96 aa).

The protein belongs to the RecR family.

May play a role in DNA repair. It seems to be involved in an RecBC-independent recombinational process of DNA repair. It may act with RecF and RecO. The protein is Recombination protein RecR of Xylella fastidiosa (strain 9a5c).